Consider the following 429-residue polypeptide: C4-dicarboxylate transport protein (429 aa).

A run of 8 helical transmembrane segments spans residues 3–23, 44–64, 76–96, 142–162, 184–204, 222–242, 326–346, and 352–372; these read LTIF…GVLL, LIKM…IAGM, IALL…LLIV, IGAF…LFGF, VIFG…FGAM, LIAC…GSIA, VIHQ…AAGV, and IVLA…LALI.

It belongs to the dicarboxylate/amino acid:cation symporter (DAACS) (TC 2.A.23) family.

It is found in the cell inner membrane. Responsible for the transport of dicarboxylates such as succinate, fumarate, and malate from the periplasm across the membrane. The protein is C4-dicarboxylate transport protein of Serratia proteamaculans (strain 568).